Here is a 408-residue protein sequence, read N- to C-terminus: UPF0761 membrane protein Avin_36810 (408 aa).

Helical transmembrane passes span 33–53 (YTAL…LSVV), 92–112 (HLTW…LMTV), 132–152 (FLLH…GFAL), 174–194 (LLKV…YVAV), 209–229 (LFAA…VALF), and 238–258 (AFAA…IVLL).

This sequence belongs to the UPF0761 family.

The protein localises to the cell inner membrane. The sequence is that of UPF0761 membrane protein Avin_36810 from Azotobacter vinelandii (strain DJ / ATCC BAA-1303).